Reading from the N-terminus, the 161-residue chain is Cyclic pyranopterin monophosphate synthase (161 aa).

Substrate-binding positions include 75-77 and 115-116; these read MCH and ME. Residue aspartate 130 is part of the active site.

This sequence belongs to the MoaC family. In terms of assembly, homohexamer; trimer of dimers.

It carries out the reaction (8S)-3',8-cyclo-7,8-dihydroguanosine 5'-triphosphate = cyclic pyranopterin phosphate + diphosphate. The protein operates within cofactor biosynthesis; molybdopterin biosynthesis. In terms of biological role, catalyzes the conversion of (8S)-3',8-cyclo-7,8-dihydroguanosine 5'-triphosphate to cyclic pyranopterin monophosphate (cPMP). This Bacillus cereus (strain 03BB102) protein is Cyclic pyranopterin monophosphate synthase.